The chain runs to 692 residues: MSYTPMSDLGQQGLFDITRTLLQQPDLASLSEALSQLVKRSALADSAGIVLWQAQSQRAQYYATRENGRPVEYEDETVLAHGPVRRILSRPDALHCNFHEFTETWPQLAASGLYPEFGHYCLLPLAAEGRIFGGCEFIRQEDRPWSEKEYDRLHTFTQIVGVVAEQIQNRVNNNVDYDLLCRERDNFRILVAITNAVLSRLDIDELVSEVAKEIHHYFNIDAISIVLRSHRKNKLNIYSTHYLDEHHPAHEQSEVDEAGTLTERVFKSKEMLLINLNERDPLAPYERMLFDTWGNQIQTLCLLPLMSGKTMLGVLKLAQCEEKVFTTANLKLLRQIAERVAIAVDNALAYQEIHRLKERLVDENLALTEQLNNVDSEFGEIIGRSEAMYNVLKQVEMVAQSDSTVLILGETGTGKELIARAIHNLSGRSGRRMVKMNCAAMPAGLLESDLFGHERGAFTGASAQRIGRFELADKSSLFLDEVGDMPLELQPKLLRVLQEQEFERLGSNKLIQTDVRLIAATNRDLKKMVADREFRNDLYYRLNVFPIQLPPLRERPEDIPLLVKAFTFKIARRMGRNIDSIPAETLRTLSSMEWPGNVRELENVVERAVLLTRGNVLQLSLPDITAVTPDTSPVATESAKEGEDEYQLIIRVLKETNGVVAGPKGAAQRLGLKRTTLLSRMKRLGIDKDALA.

The GAF domain maps to 202 to 344 (DIDELVSEVA…QIAERVAIAV (143 aa)). Residues 381-610 (IIGRSEAMYN…LENVVERAVL (230 aa)) form the Sigma-54 factor interaction domain. ATP contacts are provided by residues 409–416 (GETGTGKE) and 472–481 (ADKSSLFLDE). The segment at residues 663–682 (PKGAAQRLGLKRTTLLSRMK) is a DNA-binding region (H-T-H motif).

Required for induction of expression of the formate dehydrogenase H and hydrogenase-3 structural genes. The chain is Formate hydrogenlyase transcriptional activator (fhlA) from Salmonella typhimurium (strain SL1344).